The sequence spans 223 residues: Phosphoribosylformylglycinamidine synthase subunit PurQ (223 aa).

The Glutamine amidotransferase type-1 domain occupies 3–223; sequence SAVILLPGLN…LFAGALGITA (221 aa). Cysteine 87 serves as the catalytic Nucleophile. Active-site residues include histidine 197 and glutamate 199.

As to quaternary structure, part of the FGAM synthase complex composed of 1 PurL, 1 PurQ and 2 PurS subunits.

The protein resides in the cytoplasm. The enzyme catalyses N(2)-formyl-N(1)-(5-phospho-beta-D-ribosyl)glycinamide + L-glutamine + ATP + H2O = 2-formamido-N(1)-(5-O-phospho-beta-D-ribosyl)acetamidine + L-glutamate + ADP + phosphate + H(+). It carries out the reaction L-glutamine + H2O = L-glutamate + NH4(+). Its pathway is purine metabolism; IMP biosynthesis via de novo pathway; 5-amino-1-(5-phospho-D-ribosyl)imidazole from N(2)-formyl-N(1)-(5-phospho-D-ribosyl)glycinamide: step 1/2. Part of the phosphoribosylformylglycinamidine synthase complex involved in the purines biosynthetic pathway. Catalyzes the ATP-dependent conversion of formylglycinamide ribonucleotide (FGAR) and glutamine to yield formylglycinamidine ribonucleotide (FGAM) and glutamate. The FGAM synthase complex is composed of three subunits. PurQ produces an ammonia molecule by converting glutamine to glutamate. PurL transfers the ammonia molecule to FGAR to form FGAM in an ATP-dependent manner. PurS interacts with PurQ and PurL and is thought to assist in the transfer of the ammonia molecule from PurQ to PurL. This Brucella suis biovar 1 (strain 1330) protein is Phosphoribosylformylglycinamidine synthase subunit PurQ.